Consider the following 417-residue polypeptide: Serine hydroxymethyltransferase (417 aa).

(6S)-5,6,7,8-tetrahydrofolate-binding positions include leucine 121 and glycine 125–leucine 127. Lysine 229 bears the N6-(pyridoxal phosphate)lysine mark. A (6S)-5,6,7,8-tetrahydrofolate-binding site is contributed by serine 355–phenylalanine 357.

It belongs to the SHMT family. As to quaternary structure, homodimer. The cofactor is pyridoxal 5'-phosphate.

Its subcellular location is the cytoplasm. The catalysed reaction is (6R)-5,10-methylene-5,6,7,8-tetrahydrofolate + glycine + H2O = (6S)-5,6,7,8-tetrahydrofolate + L-serine. The protein operates within one-carbon metabolism; tetrahydrofolate interconversion. It participates in amino-acid biosynthesis; glycine biosynthesis; glycine from L-serine: step 1/1. Functionally, catalyzes the reversible interconversion of serine and glycine with tetrahydrofolate (THF) serving as the one-carbon carrier. This reaction serves as the major source of one-carbon groups required for the biosynthesis of purines, thymidylate, methionine, and other important biomolecules. Also exhibits THF-independent aldolase activity toward beta-hydroxyamino acids, producing glycine and aldehydes, via a retro-aldol mechanism. The chain is Serine hydroxymethyltransferase from Xylella fastidiosa (strain 9a5c).